Consider the following 94-residue polypeptide: Surfactant-associated protein 3 (94 aa).

Found in lung alveolar cells type I and II, as well as alveolar macrophages (at protein level). Detected also in testis and kidney. Expressed by different tissues of the ocular system like cornea, conjuctiva, lacrimal gland, eyelid and efferent tear ducts (at protein level). From these tissues is secreted into the tear film (at protein level).

It is found in the cytoplasm. Its subcellular location is the secreted. Functionally, putative surfactant protein. May be involved in wound healing and in the reduction of the surface tension at the ocular surface. This Homo sapiens (Human) protein is Surfactant-associated protein 3 (SFTA3).